The primary structure comprises 206 residues: Histidine biosynthesis bifunctional protein HisIE (206 aa).

The phosphoribosyl-AMP cyclohydrolase stretch occupies residues 1–117; sequence MGSNEVATGD…SCFPSAPGQF (117 aa). The tract at residues 118–206 is phosphoribosyl-ATP pyrophosphohydrolase; that stretch reads LGSLDALVAE…AAALLESRHQ (89 aa).

The protein in the N-terminal section; belongs to the PRA-CH family. This sequence in the C-terminal section; belongs to the PRA-PH family.

The protein localises to the cytoplasm. The enzyme catalyses 1-(5-phospho-beta-D-ribosyl)-ATP + H2O = 1-(5-phospho-beta-D-ribosyl)-5'-AMP + diphosphate + H(+). The catalysed reaction is 1-(5-phospho-beta-D-ribosyl)-5'-AMP + H2O = 1-(5-phospho-beta-D-ribosyl)-5-[(5-phospho-beta-D-ribosylamino)methylideneamino]imidazole-4-carboxamide. The protein operates within amino-acid biosynthesis; L-histidine biosynthesis; L-histidine from 5-phospho-alpha-D-ribose 1-diphosphate: step 2/9. It functions in the pathway amino-acid biosynthesis; L-histidine biosynthesis; L-histidine from 5-phospho-alpha-D-ribose 1-diphosphate: step 3/9. The protein is Histidine biosynthesis bifunctional protein HisIE of Xanthomonas axonopodis pv. citri (strain 306).